The sequence spans 167 residues: 6,7-dimethyl-8-ribityllumazine synthase (167 aa).

Residues phenylalanine 23, 57–59 (TYE), and 81–83 (AVI) each bind 5-amino-6-(D-ribitylamino)uracil. 86–87 (GT) serves as a coordination point for (2S)-2-hydroxy-3-oxobutyl phosphate. The active-site Proton donor is the histidine 89. Phenylalanine 119 lines the 5-amino-6-(D-ribitylamino)uracil pocket. Arginine 133 is a (2S)-2-hydroxy-3-oxobutyl phosphate binding site.

The protein belongs to the DMRL synthase family.

It catalyses the reaction (2S)-2-hydroxy-3-oxobutyl phosphate + 5-amino-6-(D-ribitylamino)uracil = 6,7-dimethyl-8-(1-D-ribityl)lumazine + phosphate + 2 H2O + H(+). The protein operates within cofactor biosynthesis; riboflavin biosynthesis; riboflavin from 2-hydroxy-3-oxobutyl phosphate and 5-amino-6-(D-ribitylamino)uracil: step 1/2. Catalyzes the formation of 6,7-dimethyl-8-ribityllumazine by condensation of 5-amino-6-(D-ribitylamino)uracil with 3,4-dihydroxy-2-butanone 4-phosphate. This is the penultimate step in the biosynthesis of riboflavin. The protein is 6,7-dimethyl-8-ribityllumazine synthase of Myxococcus xanthus (strain DK1622).